Reading from the N-terminus, the 1424-residue chain is Putative disease resistance protein At3g14460 (1424 aa).

An NB-ARC domain is found at 152–454 (WRQASRSRPD…AIDLLYQPRS (303 aa)). ATP is bound at residue 200–207 (GMPGVGKT). 7 LRR repeats span residues 498–523 (VSGDFCFRLEDDNIPEIPSTTRHFSF), 552–571 (PTSLESLQLTEKVLNPLLNA), 572–595 (LSGLRILSLSHYQITNLPKSLKGL), 597–618 (LLRYLDLSSTKIKELPEFVCTL), 620–641 (NLQTLLLSNCRDLTSLPKSIAE), 642–665 (LINLRLLDLVGTPLVEMPPGIKKL), and 806–830 (LPSLKYLSIEKFNILQKVGLDFFFG). Disordered regions lie at residues 911–977 (FRRS…PKDR) and 1050–1070 (IKSSVPSPRSSEAIKPSQYDD). Composition is skewed to polar residues over residues 912-927 (RRSLTNIPESPASIPS) and 934-972 (SSPTGNPKSDASTSAQPGFASSSQSNDDNEVTSTSSLSS). 5 LRR repeats span residues 1090 to 1114 (PQNLQSLHIDSCDGLTSLPENLTES), 1118 to 1139 (LHELLIIACHSLESFPGSHPPT), 1238 to 1262 (TPKLSSMLLSNCKKLQALPEKLFGL), 1264 to 1286 (SLLSLFIIKCPEIETIPGGGFPS), and 1310 to 1336 (LENLRNLEIDGGNEDIESFPEEGLLPK).

This sequence belongs to the disease resistance NB-LRR family.

Functionally, potential disease resistance protein. The sequence is that of Putative disease resistance protein At3g14460 from Arabidopsis thaliana (Mouse-ear cress).